Reading from the N-terminus, the 87-residue chain is Selenoprotein W (87 aa).

The segment at residues 10–13 (CGAU) is a cross-link (cysteinyl-selenocysteine (Cys-Sec); redox-active). Position 13 (Sec13) is a non-standard amino acid, selenocysteine. An S-glutathionyl cysteine modification is found at Cys37.

Belongs to the SelWTH family. Selenoprotein W subfamily. Interacts with DPYSL2, PRDX1, YWHAB, YWHAG, HSP70 and HSP90. As to expression, detected in muscle, heart, tongue, brain, lung, spleen, kidney and liver. Highest levels expressed in muscle and heart whereas lowest levels detected in liver (at protein level).

The protein resides in the cytoplasm. In terms of biological role, plays a role as a glutathione (GSH)-dependent antioxidant. May be involved in a redox-related process. May play a role in the myopathies of selenium deficiency. This chain is Selenoprotein W, found in Ovis aries (Sheep).